Consider the following 646-residue polypeptide: EF-hand calcium-binding domain-containing protein 6 (646 aa).

6 consecutive EF-hand domains span residues 1–27 (FLETDNEGNGILRRRDIKNALYGFDIP), 28–63 (LTPREFEKLWASYDTEGKGHITYQEFLQKLGVNYSP), 109–144 (DCYQDISKAFTKIDKSKTNYISICKMQKVLEECGCS), 214–249 (SSQLALSTAFSALDKEDTGFVKSTEFGQVLKDFCHK), 321–356 (SHYHAITQEFENFDTMKTNTISREEFRAVCNRNVQI), and 357–392 (LTDEQFDRLWNEMPVNAKGRLKYPDFLSRFSSERAA). Residue Thr29 is modified to Phosphothreonine. The interval 390–452 (RAATPTATGD…TTAIPGTPPL (63 aa)) is disordered. Positions 432–446 (KPQSHPCTAASTTAI) are enriched in polar residues. A Phosphoserine modification is found at Ser435. 2 positions are modified to phosphothreonine: Thr439 and Thr449. The tract at residues 448 to 646 (GTPPLQNCDP…YNDFLRAFLQ (199 aa)) is interaction with PARK7. 4 consecutive EF-hand domains span residues 468 to 503 (GCWRQLLKECKEKDVARQGDISASEFLALVEKFNLD), 504 to 539 (ISKEECQQLIIKYDLKNNGKFAYCDFIQSCVLLLKA), 579 to 614 (HCWRPMRRTFKSYDEAGTGLLSVADFRTVLRQYSIN), and 615 to 646 (LSEEEFFHILEYYDKTLSSNISYNDFLRAFLQ). Positions 552 to 646 (NAHKMKDSGA…YNDFLRAFLQ (95 aa)) are interaction with AR.

As to quaternary structure, microtubule inner protein component of sperm flagellar doublet microtubules. Binds PARK7. Part of a ternary complex containing PARK7, EFCAB6/DJBP and AR.

The protein resides in the nucleus. It is found in the cytoplasm. Its subcellular location is the cytoskeleton. The protein localises to the flagellum axoneme. Negatively regulates the androgen receptor by recruiting histone deacetylase complex, and protein DJ-1 antagonizes this inhibition by abrogation of this complex. Microtubule inner protein (MIP) part of the dynein-decorated doublet microtubules (DMTs) in cilia axoneme, which is required for motile cilia beating. The polypeptide is EF-hand calcium-binding domain-containing protein 6 (EFCAB6) (Macaca fascicularis (Crab-eating macaque)).